We begin with the raw amino-acid sequence, 286 residues long: Light-independent protochlorophyllide reductase iron-sulfur ATP-binding protein (286 aa).

ATP-binding positions include 10–15 and K39; that span reads GIGKST. Residue S14 participates in Mg(2+) binding. [4Fe-4S] cluster contacts are provided by C95 and C129. Residue 180-181 participates in ATP binding; sequence NR.

This sequence belongs to the NifH/BchL/ChlL family. Homodimer. Protochlorophyllide reductase is composed of three subunits; ChlL, ChlN and ChlB. It depends on [4Fe-4S] cluster as a cofactor.

The enzyme catalyses chlorophyllide a + oxidized 2[4Fe-4S]-[ferredoxin] + 2 ADP + 2 phosphate = protochlorophyllide a + reduced 2[4Fe-4S]-[ferredoxin] + 2 ATP + 2 H2O. Its pathway is porphyrin-containing compound metabolism; chlorophyll biosynthesis (light-independent). In terms of biological role, component of the dark-operative protochlorophyllide reductase (DPOR) that uses Mg-ATP and reduced ferredoxin to reduce ring D of protochlorophyllide (Pchlide) to form chlorophyllide a (Chlide). This reaction is light-independent. The L component serves as a unique electron donor to the NB-component of the complex, and binds Mg-ATP. The sequence is that of Light-independent protochlorophyllide reductase iron-sulfur ATP-binding protein from Leptolyngbya boryana (Plectonema boryanum).